The primary structure comprises 469 residues: 3-isopropylmalate dehydratase large subunit (469 aa).

[4Fe-4S] cluster-binding residues include cysteine 350, cysteine 410, and cysteine 413.

It belongs to the aconitase/IPM isomerase family. LeuC type 1 subfamily. Heterodimer of LeuC and LeuD. The cofactor is [4Fe-4S] cluster.

It carries out the reaction (2R,3S)-3-isopropylmalate = (2S)-2-isopropylmalate. Its pathway is amino-acid biosynthesis; L-leucine biosynthesis; L-leucine from 3-methyl-2-oxobutanoate: step 2/4. Functionally, catalyzes the isomerization between 2-isopropylmalate and 3-isopropylmalate, via the formation of 2-isopropylmaleate. The sequence is that of 3-isopropylmalate dehydratase large subunit from Brucella melitensis biotype 2 (strain ATCC 23457).